The primary structure comprises 336 residues: D-erythrose-4-phosphate dehydrogenase (336 aa).

Residues 11-12 and Arg80 contribute to the NAD(+) site; that span reads RI. Substrate is bound by residues 153-155, Arg199, 212-213, and Arg235; these read SCT and TK. Cys154 serves as the catalytic Nucleophile. Residue Asn317 participates in NAD(+) binding.

This sequence belongs to the glyceraldehyde-3-phosphate dehydrogenase family. Epd subfamily. As to quaternary structure, homotetramer.

It localises to the cytoplasm. The enzyme catalyses D-erythrose 4-phosphate + NAD(+) + H2O = 4-phospho-D-erythronate + NADH + 2 H(+). The protein operates within cofactor biosynthesis; pyridoxine 5'-phosphate biosynthesis; pyridoxine 5'-phosphate from D-erythrose 4-phosphate: step 1/5. Its function is as follows. Catalyzes the NAD-dependent conversion of D-erythrose 4-phosphate to 4-phosphoerythronate. This chain is D-erythrose-4-phosphate dehydrogenase, found in Aeromonas hydrophila subsp. hydrophila (strain ATCC 7966 / DSM 30187 / BCRC 13018 / CCUG 14551 / JCM 1027 / KCTC 2358 / NCIMB 9240 / NCTC 8049).